Here is a 463-residue protein sequence, read N- to C-terminus: L-seryl-tRNA(Sec) selenium transferase (463 aa).

Lysine 295 is subject to N6-(pyridoxal phosphate)lysine.

The protein belongs to the SelA family. As to quaternary structure, homodecamer; pentamer of dimers. Binds only one seryl-tRNA(Sec) per dimer. Pyridoxal 5'-phosphate is required as a cofactor.

Its subcellular location is the cytoplasm. It carries out the reaction L-seryl-tRNA(Sec) + selenophosphate + H(+) = L-selenocysteinyl-tRNA(Sec) + phosphate. It functions in the pathway aminoacyl-tRNA biosynthesis; selenocysteinyl-tRNA(Sec) biosynthesis; selenocysteinyl-tRNA(Sec) from L-seryl-tRNA(Sec) (bacterial route): step 1/1. In terms of biological role, converts seryl-tRNA(Sec) to selenocysteinyl-tRNA(Sec) required for selenoprotein biosynthesis. The protein is L-seryl-tRNA(Sec) selenium transferase of Escherichia coli O7:K1 (strain IAI39 / ExPEC).